The following is a 161-amino-acid chain: Type IV major fimbrial protein FimA (161 aa).

A propeptide spans 1–7 (leader sequence); that stretch reads MKSLQKG. Phenylalanine 8 carries the post-translational modification N-methylphenylalanine. Residues 8-28 traverse the membrane as a helical segment; sequence FTLIELMIVVAIIGILAAFAI. Cysteine 63 and cysteine 106 are oxidised to a cystine.

This sequence belongs to the N-Me-Phe pilin family. The pili are polar flexible filaments of about 5.4 nanometers diameter and 2.5 micrometers average length; they consist of only a single polypeptide chain arranged in a helical configuration of five subunits per turn in the assembled pilus.

Its subcellular location is the fimbrium. It is found in the membrane. Major component of the type IV fimbriae that plays an essential role in twitching motility, natural transformation, and protease secretion. The protein is Type IV major fimbrial protein FimA (fimA) of Dichelobacter nodosus (Bacteroides nodosus).